The primary structure comprises 218 residues: Structural protein V19 (218 aa).

The protein localises to the virion. In Sputnik virophage, this protein is Structural protein V19.